A 167-amino-acid chain; its full sequence is Lipoprotein signal peptidase (167 aa).

The next 2 helical transmembrane spans lie at 67-87 and 91-111; these read WILVALTLFAILLLSIWLWRA and LVALALGCIIGGALGNAIDRI. Catalysis depends on residues Asp118 and Asp136. A helical transmembrane segment spans residues 127–147; it reads FSWYVFNLADAAIVAGVALLI.

It belongs to the peptidase A8 family.

The protein resides in the cell inner membrane. It catalyses the reaction Release of signal peptides from bacterial membrane prolipoproteins. Hydrolyzes -Xaa-Yaa-Zaa-|-(S,diacylglyceryl)Cys-, in which Xaa is hydrophobic (preferably Leu), and Yaa (Ala or Ser) and Zaa (Gly or Ala) have small, neutral side chains.. Its pathway is protein modification; lipoprotein biosynthesis (signal peptide cleavage). In terms of biological role, this protein specifically catalyzes the removal of signal peptides from prolipoproteins. This is Lipoprotein signal peptidase from Beijerinckia indica subsp. indica (strain ATCC 9039 / DSM 1715 / NCIMB 8712).